The sequence spans 227 residues: MDNVVDVDEEGNQQKLSANSTPYQTQECVLYGSIFVKNVPDLERRLAGLWIRAAKNSMSTKCRSALEPPVHQILRRRFRTEHQIQNYWQLKYIGVPEPDQKCPTIVRKEISSLVHSQDMMTYAKSLGLRMDYEYITQGKLWTKGNIKILHSTLTRTLRAGTYDSSSLKSMSDSALVEISISLPESAEYMPAAKSLRDFADQLMPLVNMEKIDYWKKMFSTPAAPARR.

Belongs to the Mediator complex subunit 18 family. As to quaternary structure, component of the Mediator complex.

It localises to the nucleus. Component of the Mediator complex, a coactivator involved in the regulated transcription of nearly all RNA polymerase II-dependent genes. Mediator functions as a bridge to convey information from gene-specific regulatory proteins to the basal RNA polymerase II transcription machinery. Mediator is recruited to promoters by direct interactions with regulatory proteins and serves as a scaffold for the assembly of a functional preinitiation complex with RNA polymerase II and the general transcription factors. This is Mediator of RNA polymerase II transcription subunit 18 (mdt-18) from Caenorhabditis briggsae.